We begin with the raw amino-acid sequence, 107 residues long: 4-carboxymethyl-4-methylbutenolide mutase (107 aa).

The active-site Proton donor/acceptor is the His-26. 3-methylmuconolactone contacts are provided by His-26 and Tyr-39. 4-methylmuconolactone is bound by residues His-26 and Tyr-39.

The protein belongs to the MmlI family. Homodimer.

The catalysed reaction is 4-methylmuconolactone = 3-methylmuconolactone. Inhibited by p-chloromercuribenzoate. In terms of biological role, isomerase involved in the degradation of 4-methylsalicylate and 5-methylsalicylate. Catalyzes the isomerization of the dead-end metabolite 4-methylmuconolactone (4-ML) to 3-methylmuconolactone (3-ML), which can then be further degraded through a modified 3-oxoadipate pathway. Can also use 1-methylbislactone but not 3-methyl-cis,cis-muconate. The sequence is that of 4-carboxymethyl-4-methylbutenolide mutase from Pseudomonas reinekei.